A 908-amino-acid chain; its full sequence is Metabotropic glutamate receptor 8 (908 aa).

The first 33 residues, methionine 1–serine 33, serve as a signal peptide directing secretion. Over glutamine 34–tryptophan 583 the chain is Extracellular. An intrachain disulfide couples cysteine 64 to cysteine 106. Asparagine 95 is a glycosylation site (N-linked (GlcNAc...) asparagine). L-glutamate is bound by residues serine 156, alanine 177 to threonine 179, and tyrosine 227. Intrachain disulfides connect cysteine 246–cysteine 534, cysteine 369–cysteine 384, cysteine 424–cysteine 431, cysteine 516–cysteine 535, cysteine 520–cysteine 538, cysteine 541–cysteine 553, and cysteine 556–cysteine 569. Residue asparagine 298 is glycosylated (N-linked (GlcNAc...) asparagine). Residue aspartate 309 coordinates L-glutamate. Lysine 401 is an L-glutamate binding site. Residues asparagine 452 and asparagine 480 are each glycosylated (N-linked (GlcNAc...) asparagine). Asparagine 565 is a glycosylation site (N-linked (GlcNAc...) asparagine). A helical transmembrane segment spans residues alanine 584 to tyrosine 608. Over asparagine 609–glutamate 620 the chain is Cytoplasmic. A helical transmembrane segment spans residues leucine 621–alanine 641. The Extracellular portion of the chain corresponds to alanine 642–isoleucine 647. Residues cysteine 648–threonine 668 form a helical membrane-spanning segment. Topologically, residues lysine 669–glutamine 695 are cytoplasmic. A helical membrane pass occupies residues leucine 696–valine 716. The Extracellular segment spans residues aspartate 717–aspartate 746. Residues leucine 747–isoleucine 768 form a helical membrane-spanning segment. At lysine 769 to lysine 781 the chain is on the cytoplasmic side. A helical membrane pass occupies residues proline 782 to glycine 803. The Extracellular portion of the chain corresponds to threonine 804–leucine 818. Residues threonine 819–phenylalanine 843 form a helical membrane-spanning segment. At histidine 844–isoleucine 908 the chain is on the cytoplasmic side. Residue lysine 882 forms a Glycyl lysine isopeptide (Lys-Gly) (interchain with G-Cter in SUMO1) linkage.

The protein belongs to the G-protein coupled receptor 3 family. As to quaternary structure, interacts with PICK1.

The protein localises to the cell membrane. Its function is as follows. G-protein coupled receptor for glutamate. Ligand binding causes a conformation change that triggers signaling via guanine nucleotide-binding proteins (G proteins) and modulates the activity of down-stream effectors, such as adenylate cyclase. Signaling inhibits adenylate cyclase activity. This Homo sapiens (Human) protein is Metabotropic glutamate receptor 8 (GRM8).